A 472-amino-acid polypeptide reads, in one-letter code: Protein DML1 (472 aa).

Positions 441–463 (GDEREEMKQELGDMASKYEHGWE) are enriched in basic and acidic residues. A disordered region spans residues 441-472 (GDEREEMKQELGDMASKYEHGWEEESDDDDDY).

Belongs to the misato family.

It is found in the mitochondrion. In terms of biological role, involved in the partitioning of the mitochondrial organelle and mitochondrial DNA (mtDNA) inheritance. In Yarrowia lipolytica (strain CLIB 122 / E 150) (Yeast), this protein is Protein DML1 (DML1).